Reading from the N-terminus, the 209-residue chain is Large ribosomal subunit protein uL4 (209 aa).

Belongs to the universal ribosomal protein uL4 family. In terms of assembly, part of the 50S ribosomal subunit.

Its function is as follows. One of the primary rRNA binding proteins, this protein initially binds near the 5'-end of the 23S rRNA. It is important during the early stages of 50S assembly. It makes multiple contacts with different domains of the 23S rRNA in the assembled 50S subunit and ribosome. Forms part of the polypeptide exit tunnel. This chain is Large ribosomal subunit protein uL4, found in Borrelia duttonii (strain Ly).